The following is a 697-amino-acid chain: Elongation factor G (697 aa).

The region spanning Glu10 to Leu285 is the tr-type G domain. Residues Ala19–Thr26, Asp83–His87, and Asn137–Asp140 each bind GTP.

The protein belongs to the TRAFAC class translation factor GTPase superfamily. Classic translation factor GTPase family. EF-G/EF-2 subfamily.

The protein resides in the cytoplasm. In terms of biological role, catalyzes the GTP-dependent ribosomal translocation step during translation elongation. During this step, the ribosome changes from the pre-translocational (PRE) to the post-translocational (POST) state as the newly formed A-site-bound peptidyl-tRNA and P-site-bound deacylated tRNA move to the P and E sites, respectively. Catalyzes the coordinated movement of the two tRNA molecules, the mRNA and conformational changes in the ribosome. The chain is Elongation factor G from Ligilactobacillus salivarius (strain UCC118) (Lactobacillus salivarius).